The sequence spans 83 residues: uncharacterized protein (83 aa).

Belongs to the chlamydial CPn_0710/CT_666/TC_0037 family.

This is an uncharacterized protein from Chlamydia trachomatis serovar D (strain ATCC VR-885 / DSM 19411 / UW-3/Cx).